The sequence spans 270 residues: MISKINFVKMHGLGNDFVIVNKRDLSSSYDLSQLAKNMAERHTGIGCDQFIIYEEHNDFYEMIIYNIDGSSAKLCGNATRCLAKLIYLDTGKKDITVMVGNKKLLCNVNDENNISVNVGSVSFNEAWMPSRDKVWAFAERYMIDLKETICVDIGNPHLIIFSKLEPQDQKIVGEKLQAKELFADGVNVNFAEVKDNKIYLSVWERGAGLTLACGSGACGSFAAGLKLGFIHSPSTIVFKHGNLTMKEENGNIIMQGAATLVARGEYYCEQ.

Residues asparagine 15, glutamine 49, and asparagine 66 each coordinate substrate. Cysteine 75 functions as the Proton donor in the catalytic mechanism. Substrate is bound by residues 76–77, asparagine 155, asparagine 187, and 204–205; these read GN and ER. Cysteine 213 functions as the Proton acceptor in the catalytic mechanism. 214–215 lines the substrate pocket; sequence GS.

It belongs to the diaminopimelate epimerase family. In terms of assembly, homodimer.

It localises to the cytoplasm. It catalyses the reaction (2S,6S)-2,6-diaminopimelate = meso-2,6-diaminopimelate. It functions in the pathway amino-acid biosynthesis; L-lysine biosynthesis via DAP pathway; DL-2,6-diaminopimelate from LL-2,6-diaminopimelate: step 1/1. Functionally, catalyzes the stereoinversion of LL-2,6-diaminopimelate (L,L-DAP) to meso-diaminopimelate (meso-DAP), a precursor of L-lysine and an essential component of the bacterial peptidoglycan. This Rickettsia massiliae (strain Mtu5) protein is Diaminopimelate epimerase.